Consider the following 494-residue polypeptide: Xylan glycosyltransferase MUCI21 (494 aa).

The Cytoplasmic segment spans residues Met-1–Lys-40. A helical; Signal-anchor for type II membrane protein membrane pass occupies residues Leu-41–Leu-61. The Lumenal portion of the chain corresponds to Cys-62–Arg-494. An N-linked (GlcNAc...) asparagine glycan is attached at Asn-375.

Belongs to the glycosyltransferase 61 family.

It localises to the golgi apparatus membrane. In terms of biological role, glycosyletransferase required for the proper composition and structural properties of released seed coat mucilage. Required for the production of highly branched xylan polymers in seed coat mucilage. Facilitates the addition of xylose residues directly to the xylan backbone. Xylan with xylose side chains seems to be necessary for pectin attachment to the seed surface. Essential for xylan synthesis in seed coat epidermal (SCE) cells. This Arabidopsis thaliana (Mouse-ear cress) protein is Xylan glycosyltransferase MUCI21.